A 69-amino-acid chain; its full sequence is Cytochrome c oxidase subunit 8A, mitochondrial (69 aa).

The N-terminal 25 residues, M1–R25, are a transit peptide targeting the mitochondrion. The SIFI-degron signature appears at S2–L19. The Mitochondrial matrix portion of the chain corresponds to V26–G36. The helical transmembrane segment at T37–S60 threads the bilayer. At H61 to E69 the chain is on the mitochondrial intermembrane side.

This sequence belongs to the cytochrome c oxidase VIII family. In terms of assembly, component of the cytochrome c oxidase (complex IV, CIV), a multisubunit enzyme composed of 14 subunits. The complex is composed of a catalytic core of 3 subunits MT-CO1, MT-CO2 and MT-CO3, encoded in the mitochondrial DNA, and 11 supernumerary subunits COX4I, COX5A, COX5B, COX6A, COX6B, COX6C, COX7A, COX7B, COX7C, COX8 and NDUFA4, which are encoded in the nuclear genome. The complex exists as a monomer or a dimer and forms supercomplexes (SCs) in the inner mitochondrial membrane with NADH-ubiquinone oxidoreductase (complex I, CI) and ubiquinol-cytochrome c oxidoreductase (cytochrome b-c1 complex, complex III, CIII), resulting in different assemblies (supercomplex SCI(1)III(2)IV(1) and megacomplex MCI(2)III(2)IV(2)). In terms of processing, in response to mitochondrial stress, the precursor protein is ubiquitinated by the SIFI complex in the cytoplasm before mitochondrial import, leading to its degradation. Within the SIFI complex, UBR4 initiates ubiquitin chain that are further elongated or branched by KCMF1.

The protein localises to the mitochondrion inner membrane. It participates in energy metabolism; oxidative phosphorylation. Component of the cytochrome c oxidase, the last enzyme in the mitochondrial electron transport chain which drives oxidative phosphorylation. The respiratory chain contains 3 multisubunit complexes succinate dehydrogenase (complex II, CII), ubiquinol-cytochrome c oxidoreductase (cytochrome b-c1 complex, complex III, CIII) and cytochrome c oxidase (complex IV, CIV), that cooperate to transfer electrons derived from NADH and succinate to molecular oxygen, creating an electrochemical gradient over the inner membrane that drives transmembrane transport and the ATP synthase. Cytochrome c oxidase is the component of the respiratory chain that catalyzes the reduction of oxygen to water. Electrons originating from reduced cytochrome c in the intermembrane space (IMS) are transferred via the dinuclear copper A center (CU(A)) of subunit 2 and heme A of subunit 1 to the active site in subunit 1, a binuclear center (BNC) formed by heme A3 and copper B (CU(B)). The BNC reduces molecular oxygen to 2 water molecules using 4 electrons from cytochrome c in the IMS and 4 protons from the mitochondrial matrix. The polypeptide is Cytochrome c oxidase subunit 8A, mitochondrial (COX8A) (Nycticebus coucang (Slow loris)).